Reading from the N-terminus, the 505-residue chain is Flagellin (505 aa).

Belongs to the bacterial flagellin family.

The protein localises to the secreted. The protein resides in the bacterial flagellum. Flagellin is the subunit protein which polymerizes to form the filaments of bacterial flagella. The chain is Flagellin (fliC) from Salmonella montevideo.